Reading from the N-terminus, the 711-residue chain is Probable cadmium-transporting ATPase (711 aa).

The 64-residue stretch at 3–66 (EKTVYRVDGL…AGAFEHLKII (64 aa)) folds into the HMA domain. The Cd(2+) site is built by Cys-14 and Cys-17. Helical transmembrane passes span 89-109 (WRLL…IMNG), 111-131 (DFYL…YSLF), 151-171 (IAII…VVIL), 317-337 (TPAI…LFGG), and 347-367 (LSVL…VAIV). Residue Asp-398 is the 4-aspartylphosphate intermediate of the active site. The chain crosses the membrane as a helical span at residues 669-689 (VIKLIALLLVIPGWLTLWIAI).

It belongs to the cation transport ATPase (P-type) (TC 3.A.3) family. Type IB subfamily.

It localises to the cell membrane. The enzyme catalyses Cd(2+)(in) + ATP + H2O = Cd(2+)(out) + ADP + phosphate + H(+). Functionally, couples the hydrolysis of ATP with the export of cadmium. In Listeria monocytogenes, this protein is Probable cadmium-transporting ATPase (cadA).